We begin with the raw amino-acid sequence, 205 residues long: Urease accessory protein UreG (205 aa).

A GTP-binding site is contributed by 11 to 18; sequence GPVGSGKT.

It belongs to the SIMIBI class G3E GTPase family. UreG subfamily. As to quaternary structure, homodimer. UreD, UreF and UreG form a complex that acts as a GTP-hydrolysis-dependent molecular chaperone, activating the urease apoprotein by helping to assemble the nickel containing metallocenter of UreC. The UreE protein probably delivers the nickel.

It localises to the cytoplasm. Facilitates the functional incorporation of the urease nickel metallocenter. This process requires GTP hydrolysis, probably effectuated by UreG. This chain is Urease accessory protein UreG, found in Prochlorococcus marinus (strain NATL2A).